Here is a 706-residue protein sequence, read N- to C-terminus: Transferrin-binding protein B (706 aa).

The signal sequence occupies residues 1–20; sequence MKHIPLTTLCVAISAVLLTA. Cys-21 carries N-palmitoyl cysteine lipidation. Cys-21 is lipidated: S-diacylglycerol cysteine. Disordered regions lie at residues 26-92 and 384-412; these read GSNP…KEQV and GSAI…LEGG. The span at 42–51 shows a compositional bias: gly residues; it reads GNTGNTGNAG. A compositionally biased stretch (basic and acidic residues) spans 389–410; it reads SDKEKDSETKHPFTSDAKDRLE.

Belongs to the TbpB family.

It localises to the cell outer membrane. The protein resides in the cell surface. Its function is as follows. Moraxella acquires iron by extracting it from serum transferrin (TF) in its human host. Acts as a transferrin receptor and is required for transferrin utilization. The protein is Transferrin-binding protein B of Moraxella catarrhalis (Branhamella catarrhalis).